The primary structure comprises 215 residues: Pyrrolidone-carboxylate peptidase (215 aa).

Catalysis depends on residues Glu-80, Cys-143, and His-167.

Belongs to the peptidase C15 family. Homotetramer.

The protein localises to the cytoplasm. The enzyme catalyses Release of an N-terminal pyroglutamyl group from a polypeptide, the second amino acid generally not being Pro.. In terms of biological role, removes 5-oxoproline from various penultimate amino acid residues except L-proline. This is Pyrrolidone-carboxylate peptidase from Bacillus cereus (strain ATCC 14579 / DSM 31 / CCUG 7414 / JCM 2152 / NBRC 15305 / NCIMB 9373 / NCTC 2599 / NRRL B-3711).